The chain runs to 28 residues: Phospholipase A2 (28 aa).

Glycine 28 is a Ca(2+) binding site.

Ca(2+) serves as cofactor. Expressed by the venom gland.

The protein localises to the secreted. The enzyme catalyses a 1,2-diacyl-sn-glycero-3-phosphocholine + H2O = a 1-acyl-sn-glycero-3-phosphocholine + a fatty acid + H(+). PLA2 catalyzes the calcium-dependent hydrolysis of the 2-acyl groups in 3-sn-phosphoglycerides. This Scolopendra dehaani (Thai centipede) protein is Phospholipase A2.